Reading from the N-terminus, the 95-residue chain is Co-chaperonin GroES (95 aa).

This sequence belongs to the GroES chaperonin family. As to quaternary structure, heptamer of 7 subunits arranged in a ring. Interacts with the chaperonin GroEL.

It localises to the cytoplasm. In terms of biological role, together with the chaperonin GroEL, plays an essential role in assisting protein folding. The GroEL-GroES system forms a nano-cage that allows encapsulation of the non-native substrate proteins and provides a physical environment optimized to promote and accelerate protein folding. GroES binds to the apical surface of the GroEL ring, thereby capping the opening of the GroEL channel. This is Co-chaperonin GroES from Streptococcus uberis (strain ATCC BAA-854 / 0140J).